The primary structure comprises 880 residues: Translation initiation factor IF-2 (880 aa).

Basic and acidic residues-rich tracts occupy residues 180-194 (QEAATKRKQDEEAAK) and 202-228 (LAEEHSKRWAEEERQRLEAEKNGDHHI). Residues 180 to 289 (QEAATKRKQD…APESMAHGFN (110 aa)) are disordered. Over residues 249 to 262 (GRRARNKSNAKKRG) the composition is skewed to basic residues. Residues 380-549 (SRAPVVTIMG…LLQAEVLELK (170 aa)) enclose the tr-type G domain. The segment at 389–396 (GHVDHGKT) is G1. A GTP-binding site is contributed by 389–396 (GHVDHGKT). Residues 414–418 (GITQH) are G2. The G3 stretch occupies residues 435 to 438 (DTPG). GTP-binding positions include 435-439 (DTPGH) and 489-492 (NKMD). The segment at 489 to 492 (NKMD) is G4. Positions 525–527 (SAK) are G5.

It belongs to the TRAFAC class translation factor GTPase superfamily. Classic translation factor GTPase family. IF-2 subfamily.

Its subcellular location is the cytoplasm. In terms of biological role, one of the essential components for the initiation of protein synthesis. Protects formylmethionyl-tRNA from spontaneous hydrolysis and promotes its binding to the 30S ribosomal subunits. Also involved in the hydrolysis of GTP during the formation of the 70S ribosomal complex. This Shewanella baltica (strain OS223) protein is Translation initiation factor IF-2.